A 504-amino-acid chain; its full sequence is Maturase K (504 aa).

Belongs to the intron maturase 2 family. MatK subfamily.

Its subcellular location is the plastid. It is found in the chloroplast. Usually encoded in the trnK tRNA gene intron. Probably assists in splicing its own and other chloroplast group II introns. The chain is Maturase K from Taxus baccata (English yew).